Consider the following 446-residue polypeptide: Glutamine synthetase (446 aa).

In terms of domain architecture, GS beta-grasp spans 18–103 (ENVRYLRLQF…LICDVFKTDG (86 aa)). The GS catalytic domain maps to 110–446 (PRANLKRVLR…WEREQYIKQY (337 aa)). Glutamate 134 and glutamate 136 together coordinate Mg(2+). Glutamate 186 is a binding site for ATP. Residues glutamate 191 and glutamate 198 each coordinate Mg(2+). Residues 242–243 (NG) and glycine 243 each bind L-glutamate. Histidine 247 lines the Mg(2+) pocket. Residue serine 251 participates in ATP binding. L-glutamate is bound by residues arginine 300, glutamate 306, and arginine 318. Positions 318 and 323 each coordinate ATP. Mg(2+) is bound at residue glutamate 335. Arginine 337 lines the L-glutamate pocket.

The protein belongs to the glutamine synthetase family. In terms of assembly, oligomer of 12 subunits arranged in the form of two hexagons. In its feedback-inhibited form, interacts with TnrA in order to block its DNA-binding activity. It depends on Mg(2+) as a cofactor.

It is found in the cytoplasm. The catalysed reaction is L-glutamate + NH4(+) + ATP = L-glutamine + ADP + phosphate + H(+). Inhibited by glutamine. In terms of biological role, glutamine synthetase (GS) is an unusual multitasking protein that functions as an enzyme, a transcription coregulator, and a chaperone in ammonium assimilation and in the regulation of genes involved in nitrogen metabolism. It catalyzes the ATP-dependent biosynthesis of glutamine from glutamate and ammonia. Feedback-inhibited GlnA also interacts with and regulates the activity of the transcriptional regulator TnrA. During nitrogen limitation, TnrA is in its DNA-binding active state and turns on the transcription of genes required for nitrogen assimilation. Under conditions of nitrogen excess, feedback-inhibited GlnA forms a stable complex with TnrA, which inhibits its DNA-binding activity. In contrast, feedback-inhibited GlnA acts as a chaperone to stabilize the DNA-binding activity of GlnR, which represses the transcription of nitrogen assimilation genes. The sequence is that of Glutamine synthetase from Staphylococcus epidermidis (strain ATCC 35984 / DSM 28319 / BCRC 17069 / CCUG 31568 / BM 3577 / RP62A).